We begin with the raw amino-acid sequence, 369 residues long: Glutamate 5-kinase (369 aa).

Lys-14 provides a ligand contact to ATP. Ser-56, Asp-143, and Asn-155 together coordinate substrate. Residues 175 to 176 and 215 to 221 contribute to the ATP site; these read SD and TGGMASK. One can recognise a PUA domain in the interval 277 to 351; it reads AGKIRLDQGA…GMKTQELPDD (75 aa).

The protein belongs to the glutamate 5-kinase family.

It localises to the cytoplasm. It carries out the reaction L-glutamate + ATP = L-glutamyl 5-phosphate + ADP. It participates in amino-acid biosynthesis; L-proline biosynthesis; L-glutamate 5-semialdehyde from L-glutamate: step 1/2. Functionally, catalyzes the transfer of a phosphate group to glutamate to form L-glutamate 5-phosphate. This chain is Glutamate 5-kinase, found in Corynebacterium efficiens (strain DSM 44549 / YS-314 / AJ 12310 / JCM 11189 / NBRC 100395).